The following is a 221-amino-acid chain: Cytidylate kinase (221 aa).

11 to 19 lines the ATP pocket; that stretch reads GPSGVGKST.

Belongs to the cytidylate kinase family. Type 1 subfamily.

It localises to the cytoplasm. The enzyme catalyses CMP + ATP = CDP + ADP. It carries out the reaction dCMP + ATP = dCDP + ADP. This chain is Cytidylate kinase, found in Mycoplasmopsis pulmonis (strain UAB CTIP) (Mycoplasma pulmonis).